Consider the following 3999-residue polypeptide: Hybrid PKS-NRPS synthetase xenE (3999 aa).

In terms of domain architecture, Ketosynthase family 3 (KS3) spans 13 to 449 (REPIAVVGSG…GTNAHCIIEN (437 aa)). Active-site for beta-ketoacyl synthase activity residues include Cys-186, His-325, and His-369. In terms of domain architecture, Malonyl-CoA:ACP transacylase (MAT) spans 562–879 (VFTGQGAQWP…TGLLNRGKDD (318 aa)). The tract at residues 949–1084 (NPLLGSRTTD…GRVIVITGET (136 aa)) is N-terminal hotdog fold. The PKS/mFAS DH domain maps to 949-1253 (NPLLGSRTTD…VVAFAEQTED (305 aa)). Positions 950-1252 (PLLGSRTTDV…RVVAFAEQTE (303 aa)) are dehydratase (DH) domain. The active-site Proton acceptor; for dehydratase activity is the His-981. The segment at 1099–1253 (LVDIPEDRFY…VVAFAEQTED (155 aa)) is C-terminal hotdog fold. Asp-1159 acts as the Proton donor; for dehydratase activity in catalysis. Residues 1298–1593 (YMKQLVTLFP…FSGADSPMPE (296 aa)) form a methyltransferase (cMeT) domain region. The Ketoreductase (KR) domain maps to 2133–2306 (TYVLFGLTSD…AASILHLGAV (174 aa)). One can recognise a Carrier 1 domain in the interval 2414-2495 (EEILEIVQDA…QLVEYAIGSM (82 aa)). Ser-2455 carries the O-(pantetheine 4'-phosphoryl)serine modification. Residues 2501–2573 (PNRADSAKAS…EESPSESVND (73 aa)) are disordered. Over residues 2526–2554 (SVSSSPSSLPKTSASGSSQQMSEGSSKTS) the composition is skewed to low complexity. A condensation region spans residues 2580–3015 (EKVLPVSPGQ…EEVSLFTEQE (436 aa)). The segment at 3045–3453 (AVHTDKVALK…RIEGDTQIKL (409 aa)) is adenylation. In terms of domain architecture, Carrier 2 spans 3562 to 3642 (RKLTDTESKL…AMAAAIQDTS (81 aa)). At Ser-3602 the chain carries O-(pantetheine 4'-phosphoryl)serine. The segment at 3681–3900 (LTGATGFLGK…IDLITVEKAA (220 aa)) is reductase-like (R) domain (R).

The protein in the C-terminal section; belongs to the NRP synthetase family.

It functions in the pathway mycotoxin biosynthesis. Functionally, hybrid PKS-NRPS synthetase; part of the gene cluster that mediates the biosynthesis of xenoacremones such as xenoacremone A, a compound that shows inhibitory activity toward the PI3K/AKT signaling pathway and which has the ability to induce apoptosis of A549 lung cancer cells. Within the pathway, cooperation of the hybrid PKS-NRPS xenE and the trans-acting enoyl reductase xenG is responsible for the formation of the reduced tyrosine-nonaketide derivative. The PKS module of xenE acted in combination with the trans-acting enoyl reductase xenG to produce a double-methylated nonaketide attached to the ACP domain. In parallel, the adenylation (A) domain of the NRPS module activated L-tyrosine, which was then transferred to the ACP domain. The condensation (C) domain subsequently linked this group to the polyketide chain, forming an enzyme-bound amide. Reductive release by the C-terminal R domain afforded the aldehyde derivative. The alpha/beta hydrolase xenA then accelerates intramolecular nucleophilic attack to give a pyrrolidone derivative. Subsequently, three enzymes, xenF, xenD, and xenC, coordinately participate in the conversion to xenoacremone B. XenF catalyzes sigmatropic rearrangement to form an A-ring, which leads to an unusual intermediate with a hexane ring, which is required for the formation of the tricarbocyclic product. Epoxidation catalyzed by xenD and the formation of the paracyclophane ether catalyzed by xenC initiate a spontaneous intramolecular Diels-Alder (IMDA) reaction to yield xenoacremone B. Spontaneous hydration of xenoacremone B leads to the formation of xenoacremone A, which undergoes subsequent methylation to afford xenoacremone C. This is Hybrid PKS-NRPS synthetase xenE from Xenoacremonium sinensis (Endophyte fungus).